Reading from the N-terminus, the 186-residue chain is MSYLTKYIDYFKSFTIMENPTESSRRDMEILVKNISSSLTTFTRDPIGMVVSSLMLLLVYFCFATTFIYKGISLFIPSYCIYHVLNSNTNQEVKYKNILTYFFIYSHIEFISDILETVGFGLLHLKIALVIVLLYTVHYRNEWLEMIYNKIVYFDTIGFYTLFFTYSRLIQEYNKFRQTVKIKKNE.

The N-linked (GlcNAc...) asparagine; by host glycan is linked to N34. The next 3 membrane-spanning stretches (helical) occupy residues 47-67 (IGMVVSSLMLLLVYFCFATTF), 114-134 (ILETVGFGLLHLKIALVIVLL), and 144-164 (LEMIYNKIVYFDTIGFYTLFF).

The protein resides in the membrane. This is an uncharacterized protein from Acanthamoeba polyphaga mimivirus (APMV).